The chain runs to 514 residues: Maturase K (514 aa).

Belongs to the intron maturase 2 family. MatK subfamily.

The protein localises to the plastid. The protein resides in the chloroplast. Usually encoded in the trnK tRNA gene intron. Probably assists in splicing its own and other chloroplast group II introns. The protein is Maturase K of Acer palmatum (Japanese maple).